Reading from the N-terminus, the 567-residue chain is Dihydroxy-acid dehydratase (567 aa).

Cys52 contacts [2Fe-2S] cluster. Asp84 contacts Mg(2+). Position 125 (Cys125) interacts with [2Fe-2S] cluster. The Mg(2+) site is built by Asp126 and Lys127. Lys127 is subject to N6-carboxylysine. Position 197 (Cys197) interacts with [2Fe-2S] cluster. Glu448 contributes to the Mg(2+) binding site. Residue Ser474 is the Proton acceptor of the active site.

Belongs to the IlvD/Edd family. In terms of assembly, homodimer. [2Fe-2S] cluster is required as a cofactor. The cofactor is Mg(2+).

The catalysed reaction is (2R)-2,3-dihydroxy-3-methylbutanoate = 3-methyl-2-oxobutanoate + H2O. It catalyses the reaction (2R,3R)-2,3-dihydroxy-3-methylpentanoate = (S)-3-methyl-2-oxopentanoate + H2O. It functions in the pathway amino-acid biosynthesis; L-isoleucine biosynthesis; L-isoleucine from 2-oxobutanoate: step 3/4. The protein operates within amino-acid biosynthesis; L-valine biosynthesis; L-valine from pyruvate: step 3/4. Its function is as follows. Functions in the biosynthesis of branched-chain amino acids. Catalyzes the dehydration of (2R,3R)-2,3-dihydroxy-3-methylpentanoate (2,3-dihydroxy-3-methylvalerate) into 2-oxo-3-methylpentanoate (2-oxo-3-methylvalerate) and of (2R)-2,3-dihydroxy-3-methylbutanoate (2,3-dihydroxyisovalerate) into 2-oxo-3-methylbutanoate (2-oxoisovalerate), the penultimate precursor to L-isoleucine and L-valine, respectively. The protein is Dihydroxy-acid dehydratase of Streptococcus pneumoniae serotype 2 (strain D39 / NCTC 7466).